Reading from the N-terminus, the 320-residue chain is Mitochondrial oxaloacetate transport protein (320 aa).

Solcar repeat units lie at residues 21–114 (LGPV…IRRT), 126–218 (NKLA…AKRM), and 227–313 (EGMI…TNKL). Transmembrane regions (helical) follow at residues 26 to 47 (GFLS…FEVI), 91 to 111 (GTAY…YEPI), 129 to 145 (AINV…GALF), 197 to 217 (AILR…WAKR), 233 to 253 (LTAS…FDTV), and 285 to 306 (LYKG…CLTF).

Belongs to the mitochondrial carrier (TC 2.A.29) family.

The protein localises to the mitochondrion inner membrane. It carries out the reaction a dicarboxylate(in) + sulfate(out) = a dicarboxylate(out) + sulfate(in). It catalyses the reaction (2S)-2-isopropylmalate(in) + sulfate(out) = (2S)-2-isopropylmalate(out) + sulfate(in). The enzyme catalyses (2R,3S)-3-isopropylmalate(in) + sulfate(out) = (2R,3S)-3-isopropylmalate(out) + sulfate(in). The catalysed reaction is malonate(in) + sulfate(out) = malonate(out) + sulfate(in). It carries out the reaction oxaloacetate(in) + sulfate(out) = oxaloacetate(out) + sulfate(in). It catalyses the reaction thiosulfate(in) + sulfate(out) = thiosulfate(out) + sulfate(in). Its function is as follows. Antiporter that exchanges dicarboxylates and sulfur oxoanions across the inner membrane of mitochondria. Exports alpha-isopropylmalate from mitochondrial matrix to the cytosol, where it serves as a precursor for leucine biosynthesis. The protein is Mitochondrial oxaloacetate transport protein (oac1) of Schizosaccharomyces pombe (strain 972 / ATCC 24843) (Fission yeast).